Here is a 231-residue protein sequence, read N- to C-terminus: Ion-translocating oxidoreductase complex subunit E (231 aa).

6 helical membrane passes run 18–38, 39–59, 63–83, 86–106, 125–145, and 182–202; these read ALVQ…ATNA, LGLG…ISTL, TPAE…VSAV, LINA…PLIV, ALSA…MFVL, and PFLL…MLAG.

Belongs to the NqrDE/RnfAE family. As to quaternary structure, the complex is composed of six subunits: RsxA, RsxB, RsxC, RsxD, RsxE and RsxG.

It localises to the cell inner membrane. Part of a membrane-bound complex that couples electron transfer with translocation of ions across the membrane. Required to maintain the reduced state of SoxR. This Escherichia coli O127:H6 (strain E2348/69 / EPEC) protein is Ion-translocating oxidoreductase complex subunit E.